A 652-amino-acid polypeptide reads, in one-letter code: MPPPLPLLLLTVLVVAAARPGCEFERNPAGECHRPPAADSATCVDLQLRTCSDAAYNHTTFPNLLQHRSWEVVEASSEYILLSVLHQLLEGQCNPDLRLLGCAVLAPRCEGGWVRRPCRHICEGLREVCQPAFDAIDMAWPYFLDCHRYFTREDEGCYDPLEKLRGGLEADEALPSGLPPTFIRFSHHSYAQMVRVLRRTASRCAHVARTYSIGRSFDGRELLVIEFSSRPGQHELMEPEVKLIGNIHGNEVAGREMLIYLAQYLCSEYLLGNPRIQRLLNTTRIHLLPSMNPDGYEVAAAEGAGYNGWTSGRQNAQNLDLNRNFPDLTSEYYRLAETRGARSDHIPIPQHYWWGKVAPETKAIMKWMQTIPFVLSASLHGGDLVVSYPFDFSKHPQEEKMFSPTPDEKMFKLLSRAYADVHPMMMDRSENRCGGNFLKRGSIINGADWYSFTGGMSDFNYLHTNCFEITVELGCVKFPPEEALYILWQHNKESLLNFVETVHRGIKGVVTDKFGKPVKNARISVKGIRHDITTAPDGDYWRLLPPGIHIVIAQAPGYAKVIKKVIIPARMKRAGRVDFILQPLGMGPKNFIHGLRRTGPHDPLGGASSLGEATEPDPLRARRQPSADGSKPWWWSYFTSLSTHRPRWLLKY.

The signal sequence occupies residues 1 to 18 (MPPPLPLLLLTVLVVAAA). In terms of domain architecture, FZ spans 27–160 (NPAGECHRPP…TREDEGCYDP (134 aa)). 5 disulfides stabilise this stretch: C43–C109, C51–C102, C93–C129, C118–C157, and C122–C146. The 317-residue stretch at 186–502 (SHHSYAQMVR…ESLLNFVETV (317 aa)) folds into the Peptidase M14 domain. 2 residues coordinate Zn(2+): H248 and E251. N-linked (GlcNAc...) asparagine glycosylation is present at N281. H380 serves as a coordination point for Zn(2+). E472 functions as the Proton donor/acceptor in the catalytic mechanism. The segment at 595 to 629 (LRRTGPHDPLGGASSLGEATEPDPLRARRQPSADG) is disordered.

It belongs to the peptidase M14 family. Zn(2+) is required as a cofactor. In terms of tissue distribution, in placenta, it is present within invasive trophoblasts and in the surrounding extracellular space. Also present in amnion cells, but is not readily apparent in the extracellular matrix of this cell type. Present in normal pituitary gland and neoplastic pituitary gland (especially POMC-, GH- and PRL-producing adenomas) (at protein level). Widely expressed.

The protein localises to the secreted. The protein resides in the extracellular space. Its subcellular location is the extracellular matrix. With respect to regulation, inhibited by 2-mercaptomethyl-3-guanidinoethylthiopropanoic acid (MGTA) and guanidinoethylmercaptosuccinic acid (GEMSA). Inhibited by chelating agents such as EDTA and EGTA. Its function is as follows. Cleaves substrates with C-terminal arginine residues. Probably modulates the Wnt signaling pathway, by cleaving some undefined protein. May play a role in cleavage during prohormone processing. This chain is Carboxypeptidase Z (CPZ), found in Homo sapiens (Human).